A 476-amino-acid chain; its full sequence is UDP-glycosyltransferase 71C3 (476 aa).

UDP-alpha-D-glucose contacts are provided by residues Ser-290, 349–351, 366–374, and 388–391; these read APQ, HCGWNSVLE, and YAEQ.

The protein belongs to the UDP-glycosyltransferase family.

Possesses low quercetin 3-O-glucosyltransferase activity in vitro. The sequence is that of UDP-glycosyltransferase 71C3 (UGT71C3) from Arabidopsis thaliana (Mouse-ear cress).